A 213-amino-acid chain; its full sequence is ABA-inducible protein PHV A1 (213 aa).

Disordered regions lie at residues 1–158 (MASN…KDKT) and 182–213 (NTLG…TRNH). The segment covering 13–23 (GETKARTEEKT) has biased composition (basic and acidic residues). 9 LEA 11-mer repeat repeats span residues 27-37 (MGATKQKAGQT), 38-48 (TEATKQKAGET), 49-59 (AEATKQKTGET), 60-70 (AEAAKQKAAEA), 78-88 (AQAAKDKTYET), 89-99 (AQAAKERAAQG), 111-121 (TEAAKQKAAET), 122-132 (TEAAKQKAAEA), and 133-143 (TEAAKQKASDT). Positions 27–143 (MGATKQKAGQ…EAAKQKASDT (117 aa)) are 11 X 11 AA tandem repeats of T-E-A-A-K-Q-K-A-A-E-T. 3 stretches are compositionally biased toward basic and acidic residues: residues 41-74 (TKQK…KDKT), 81-98 (AKDK…RAAQ), and 109-140 (EKTE…KQKA). A compositionally biased stretch (low complexity) spans 193–213 (ATKDATTGATVKDTTTTTRNH).

This sequence belongs to the LEA type 4 family.

The polypeptide is ABA-inducible protein PHV A1 (HVA1) (Hordeum vulgare (Barley)).